Reading from the N-terminus, the 340-residue chain is DNA-directed RNA polymerase subunit alpha (340 aa).

The tract at residues 1 to 238 is alpha N-terminal domain (alpha-NTD); that stretch reads MVDPIVTKNW…EQLSIFINFD (238 aa). Residues 255 to 340 are alpha C-terminal domain (alpha-CTD); that stretch reads LNENLFRSVD…AAPQGGAPKV (86 aa).

This sequence belongs to the RNA polymerase alpha chain family. As to quaternary structure, homodimer. The RNAP catalytic core consists of 2 alpha, 1 beta, 1 beta' and 1 omega subunit. When a sigma factor is associated with the core the holoenzyme is formed, which can initiate transcription.

The catalysed reaction is RNA(n) + a ribonucleoside 5'-triphosphate = RNA(n+1) + diphosphate. In terms of biological role, DNA-dependent RNA polymerase catalyzes the transcription of DNA into RNA using the four ribonucleoside triphosphates as substrates. This Anaeromyxobacter dehalogenans (strain 2CP-1 / ATCC BAA-258) protein is DNA-directed RNA polymerase subunit alpha.